The chain runs to 288 residues: Homoserine kinase (288 aa).

79-89 (PPARGLGSSSA) lines the ATP pocket.

It belongs to the GHMP kinase family. Homoserine kinase subfamily.

Its subcellular location is the cytoplasm. The enzyme catalyses L-homoserine + ATP = O-phospho-L-homoserine + ADP + H(+). It participates in amino-acid biosynthesis; L-threonine biosynthesis; L-threonine from L-aspartate: step 4/5. Its function is as follows. Catalyzes the ATP-dependent phosphorylation of L-homoserine to L-homoserine phosphate. This is Homoserine kinase from Listeria innocua serovar 6a (strain ATCC BAA-680 / CLIP 11262).